The primary structure comprises 266 residues: MEGSVCVDGAAAPAPDEASLIEGVSNAVLLVLVLSVTLLAGLTTLLCRSEQQRIHPESQERVRVVREQLQAEQVSSESRHQFYSDMSCPVCLQQAVLPVETNCGHLFCGSCIIAYWRYGTWLGAISCPICRQMVTLLFPLFQDSEQSAVAADSPVEPTLILTDISDYNRRFSGQPRSLLDRLRDVPTLLRHAFREMFSVGGLFWMFRVRILLCVCGALAYLVSPLDFLPEGVLGLLGFLDDFFVILLLFIYISIMYREVVTQRLAG.

Residues 1–26 lie on the Lumenal side of the membrane; it reads MEGSVCVDGAAAPAPDEASLIEGVSN. A helical membrane pass occupies residues 27-47; sequence AVLLVLVLSVTLLAGLTTLLC. The Cytoplasmic segment spans residues 48–209; sequence RSEQQRIHPE…GGLFWMFRVR (162 aa). An RING-type zinc finger spans residues 88–131; sequence CPVCLQQAVLPVETNCGHLFCGSCIIAYWRYGTWLGAISCPICR. A helical membrane pass occupies residues 210-230; it reads ILLCVCGALAYLVSPLDFLPE. Residue Gly231 is a topological domain, lumenal. Residues 232 to 252 form a helical membrane-spanning segment; it reads VLGLLGFLDDFFVILLLFIYI. Over 253-266 the chain is Cytoplasmic; the sequence is SIMYREVVTQRLAG.

In terms of tissue distribution, highly expressed in the developing brain, and less within intersomitic structures of the trunk.

It localises to the endoplasmic reticulum membrane. It catalyses the reaction S-ubiquitinyl-[E2 ubiquitin-conjugating enzyme]-L-cysteine + [acceptor protein]-L-lysine = [E2 ubiquitin-conjugating enzyme]-L-cysteine + N(6)-ubiquitinyl-[acceptor protein]-L-lysine.. Its pathway is protein modification; protein ubiquitination. Its function is as follows. E3 ubiquitin-protein ligase that plays an essential role in stimulus-induced inositol 1,4,5-trisphosphate receptor (ITPR) ubiquitination and degradation via the endoplasmic reticulum-associated degradation (ERAD) pathway. Also involved in ITPR turnover in resting cells. This Danio rerio (Zebrafish) protein is E3 ubiquitin-protein ligase RNF170 (rnf170).